The sequence spans 349 residues: MTDSNQTIPSISDIHDGALAARLQSALDNKTKPLGALGRLESLALRIGLVLGSETPVLEAPQMLVCAADHGLAARGVSAFPSDVTWQMVENFLAGGAAVSVLALQHGLALTVVDCGVRRDFQARPGLVSRRIAAGTADASAGPAMTAEQCAQAIANGREVVRALPGNALLLGEMGIGNSSAAALLLARLAGLDIDGCTGSGTGLDAAGLARKREVLRDVLALHAAASEPLDALAAFGGFEIATLVGAVLQAAQERRVIVIDGFIASAAVLVAQALQPHVAQRCVAAHSSAEPGHALLLKHLGLEPLLNLDLRLGEGSGGALAWPLLESACRILREMASFEAAGVSRKDS.

Residue glutamate 315 is the Proton acceptor of the active site.

It belongs to the CobT family.

The catalysed reaction is 5,6-dimethylbenzimidazole + nicotinate beta-D-ribonucleotide = alpha-ribazole 5'-phosphate + nicotinate + H(+). It participates in nucleoside biosynthesis; alpha-ribazole biosynthesis; alpha-ribazole from 5,6-dimethylbenzimidazole: step 1/2. Its function is as follows. Catalyzes the synthesis of alpha-ribazole-5'-phosphate from nicotinate mononucleotide (NAMN) and 5,6-dimethylbenzimidazole (DMB). The sequence is that of Nicotinate-nucleotide--dimethylbenzimidazole phosphoribosyltransferase from Variovorax paradoxus (strain S110).